The following is a 156-amino-acid chain: Small ribosomal subunit protein uS7 (156 aa).

This sequence belongs to the universal ribosomal protein uS7 family. As to quaternary structure, part of the 30S ribosomal subunit. Contacts proteins S9 and S11.

Its function is as follows. One of the primary rRNA binding proteins, it binds directly to 16S rRNA where it nucleates assembly of the head domain of the 30S subunit. Is located at the subunit interface close to the decoding center, probably blocks exit of the E-site tRNA. The protein is Small ribosomal subunit protein uS7 of Thermodesulfovibrio yellowstonii (strain ATCC 51303 / DSM 11347 / YP87).